Consider the following 100-residue polypeptide: Small ribosomal subunit protein uS14c (100 aa).

Belongs to the universal ribosomal protein uS14 family. Part of the 30S ribosomal subunit.

The protein resides in the plastid. It localises to the chloroplast. Its function is as follows. Binds 16S rRNA, required for the assembly of 30S particles. This Coffea arabica (Arabian coffee) protein is Small ribosomal subunit protein uS14c.